A 66-amino-acid chain; its full sequence is Phylloseptin-H5 (66 aa).

The N-terminal stretch at 1-22 is a signal peptide; it reads MAFLKKSLFLVLFLGLVSLSIC. A propeptide spanning residues 23–44 is cleaved from the precursor; sequence EEEKRETEEEENEQEDDDKSEE. The disordered stretch occupies residues 24–44; it reads EEKRETEEEENEQEDDDKSEE. Acidic residues predominate over residues 30–41; the sequence is EEEENEQEDDDK. Residue F65 is modified to Phenylalanine amide.

Expressed by the skin glands.

The protein resides in the secreted. Functionally, has antibacterial activity against the Gram-negative bacteria E.coli and P.aeruginosa, and the Gram-positive bacterium S.aureus. No hemolytic activity. The protein is Phylloseptin-H5 (psn7) of Pithecopus hypochondrialis (Orange-legged leaf frog).